The sequence spans 1035 residues: Alpha-mannosidase B (1035 aa).

The signal sequence occupies residues 1–20; that stretch reads MGKVLILFLFVLLLITFINC. N-linked (GlcNAc...) asparagine glycans are attached at residues Asn-19 and Asn-30. Zn(2+)-binding residues include His-47 and Asp-49. Residue Asn-63 is glycosylated (N-linked (GlcNAc...) asparagine). Residue Asp-161 coordinates Zn(2+). Catalysis depends on Asp-161, which acts as the Nucleophile. N-linked (GlcNAc...) asparagine glycosylation is found at Asn-245, Asn-250, Asn-270, Asn-309, Asn-327, and Asn-438. His-446 contributes to the Zn(2+) binding site. N-linked (GlcNAc...) asparagine glycosylation is found at Asn-487, Asn-497, Asn-503, Asn-710, Asn-719, Asn-735, Asn-792, Asn-852, Asn-863, Asn-880, Asn-962, and Asn-993.

Belongs to the glycosyl hydrolase 38 family. The cofactor is Zn(2+).

The protein localises to the secreted. It catalyses the reaction Hydrolysis of terminal, non-reducing alpha-D-mannose residues in alpha-D-mannosides.. This Dictyostelium discoideum (Social amoeba) protein is Alpha-mannosidase B (manB).